The following is a 457-amino-acid chain: Peptidyl-prolyl cis-trans isomerase FKBP5 (457 aa).

An N-acetylmethionine modification is found at Met-1. The tract at residues 1-26 (MTTDEGAKNSRGNPAATVAEQGEDVT) is disordered. Lys-28 is subject to N6-acetyllysine. PPIase FKBP-type domains follow at residues 50–138 (GDRV…LDFK) and 165–251 (GARV…KSFE). 3 TPR repeats span residues 268-301 (AAIVKEKGTVYFKGGKYVQAVIQYGKIVSWLEME), 317-350 (LAAFLNLAMCYLKLREYTKAVECCDKALGLDSAN), and 351-384 (EKGLYRRGEAQLLMNEFESAKGDFEKVLEVNPQN). The tract at residues 421-457 (AKEEANKAMSKKTSEGVTNEKLTASHAVEEEKPEGHV) is disordered. Ser-445 carries the post-translational modification Phosphoserine. The span at 447–457 (AVEEEKPEGHV) shows a compositional bias: basic and acidic residues.

In terms of assembly, part of a heteromultimeric cytoplasmic complex with HSP90AA1, HSPA1A/HSPA1B and steroid receptors. Upon ligand binding dissociates from the complex and FKBP4 takes its place. Interacts with functionally mature heterooligomeric progesterone receptor complexes along with HSP90 and TEBP. Interacts with NR3C1. Interacts with Akt/AKT1 and PHLPP1; enhancing dephosphorylation and subsequent activation of Akt/AKT1. Interacts with IFI44L; this interaction modulates the kinase activity of IKBKB and IKBKE. Interacts with IKBKB and IKBKE. Acetylation impairs ability to promote interaction between Akt/AKT1 and PHLPP1. Deacetylation by SIRT7 promotes interaction between Akt/AKT1 and PHLPP1, leading to suppress Akt/AKT1 activation. Post-translationally, ubiquitinated, leading to degradation in a proteasome-dependent manner. Deubiquitinated by USP49, leading to stabilization.

The protein resides in the cytoplasm. Its subcellular location is the nucleus. The enzyme catalyses [protein]-peptidylproline (omega=180) = [protein]-peptidylproline (omega=0). With respect to regulation, inhibited by both FK506 and rapamycin. Its function is as follows. Immunophilin protein with PPIase and co-chaperone activities. Component of unligated steroid receptors heterocomplexes through interaction with heat-shock protein 90 (HSP90). Plays a role in the intracellular trafficking of heterooligomeric forms of steroid hormone receptors maintaining the complex into the cytoplasm when unliganded. Acts as a regulator of Akt/AKT1 activity by promoting the interaction between Akt/AKT1 and PHLPP1, thereby enhancing dephosphorylation and subsequent activation of Akt/AKT1. Interacts with IKBKE and IKBKB which facilitates IKK complex assembly leading to increased IKBKE and IKBKB kinase activity, NF-kappaB activation, and IFN production. In Saimiri boliviensis boliviensis (Bolivian squirrel monkey), this protein is Peptidyl-prolyl cis-trans isomerase FKBP5 (FKBP5).